Consider the following 158-residue polypeptide: Small ribosomal subunit protein uS9 (158 aa).

Residues 1–20 (MTEAVETETVEPTTDEATAA) are disordered. Residues 10 to 20 (VEPTTDEATAA) are compositionally biased toward low complexity.

Belongs to the universal ribosomal protein uS9 family.

The chain is Small ribosomal subunit protein uS9 from Mycobacterium sp. (strain JLS).